Consider the following 321-residue polypeptide: Olfactory receptor 14J1 (321 aa).

The Extracellular segment spans residues 1-23 (MVNLTSMSGFLLMGFSDERKLQI). N-linked (GlcNAc...) asparagine glycosylation occurs at asparagine 3. The helical transmembrane segment at 24–44 (LHALVFLVTYLLALTGNLLII) threads the bilayer. The Cytoplasmic segment spans residues 45–52 (TIITVDRR). Residues 53-73 (LHSPMYYFLKHLSLLDLCFIS) form a helical membrane-spanning segment. Residues 74–97 (VTVPQSIANSLMGNGYISLVQCIL) are Extracellular-facing. Cysteine 95 and cysteine 187 form a disulfide bridge. The chain crosses the membrane as a helical span at residues 98-118 (QVFFFIALASSEVAILTVMSY). Residues 119–137 (DRYAAICQPLHYETIMDPR) are Cytoplasmic-facing. The chain crosses the membrane as a helical span at residues 138-158 (ACRHAVIAVWIAGGLSGLMHA). Residues 159 to 194 (AINFSIPLCGKRVIHQFFCDVPQMLKLACSYEFINE) lie on the Extracellular side of the membrane. The helical transmembrane segment at 195–215 (IALAAFTTSAAFICLISIVLS) threads the bilayer. The Cytoplasmic portion of the chain corresponds to 216–235 (YIRIFSTVLRIPSAEGRTKV). A helical transmembrane segment spans residues 236-256 (FSTCLPHLFVATFFLSAAGFE). At 257 to 269 (FLRLPSDSSSTVD) the chain is on the extracellular side. Residues 270–290 (LVFSVFYTVIPPTLNPVIYSL) traverse the membrane as a helical segment. Over 291–321 (RNDSMKAALRKMLSKEELPQRKMCLKAMFKL) the chain is Cytoplasmic.

This sequence belongs to the G-protein coupled receptor 1 family.

The protein localises to the cell membrane. In terms of biological role, odorant receptor. This is Olfactory receptor 14J1 (OR14J1) from Homo sapiens (Human).